Consider the following 570-residue polypeptide: Dihydroxy-acid dehydratase 2 (570 aa).

A [2Fe-2S] cluster-binding site is contributed by Cys-51. A Mg(2+)-binding site is contributed by Asp-83. Cys-124 contacts [2Fe-2S] cluster. The Mg(2+) site is built by Asp-125 and Lys-126. An N6-carboxylysine modification is found at Lys-126. Cys-196 is a binding site for [2Fe-2S] cluster. Glu-446 is a Mg(2+) binding site. Residue Ser-472 is the Proton acceptor of the active site.

Belongs to the IlvD/Edd family. In terms of assembly, homodimer. It depends on [2Fe-2S] cluster as a cofactor. The cofactor is Mg(2+).

It catalyses the reaction (2R)-2,3-dihydroxy-3-methylbutanoate = 3-methyl-2-oxobutanoate + H2O. It carries out the reaction (2R,3R)-2,3-dihydroxy-3-methylpentanoate = (S)-3-methyl-2-oxopentanoate + H2O. The protein operates within amino-acid biosynthesis; L-isoleucine biosynthesis; L-isoleucine from 2-oxobutanoate: step 3/4. Its pathway is amino-acid biosynthesis; L-valine biosynthesis; L-valine from pyruvate: step 3/4. Functions in the biosynthesis of branched-chain amino acids. Catalyzes the dehydration of (2R,3R)-2,3-dihydroxy-3-methylpentanoate (2,3-dihydroxy-3-methylvalerate) into 2-oxo-3-methylpentanoate (2-oxo-3-methylvalerate) and of (2R)-2,3-dihydroxy-3-methylbutanoate (2,3-dihydroxyisovalerate) into 2-oxo-3-methylbutanoate (2-oxoisovalerate), the penultimate precursor to L-isoleucine and L-valine, respectively. The protein is Dihydroxy-acid dehydratase 2 of Bordetella bronchiseptica (strain ATCC BAA-588 / NCTC 13252 / RB50) (Alcaligenes bronchisepticus).